The following is a 463-amino-acid chain: Autophagy-related protein 36 (463 aa).

The RING-type; atypical zinc finger occupies 5-45; it reads CSICLEVLVDKEAFTEPCLHYYHNECIKEWTKRANTCPKCR. Residues 85–131 form a PHD-type zinc finger; that stretch reads TNLCALCEDPSTSLIYCESCGGSFHFNCIGIGDELDSEWCCPLCGMF. Polar residues predominate over residues 229–242; sequence TQNSQSSEFSTENN. Residues 229-281 form a disordered region; it reads TQNSQSSEFSTENNVVPLKNTHELGRKLKKPRRASGIKKNVVERSSSHQSTQI. Residues 255 to 264 show a composition bias toward basic residues; sequence KLKKPRRASG.

Interacts with ATG28.

Micropexophagy-specific protein required for efficient micropexophagic apparatus (MIPA) formation but not for general autophagy. This Komagataella phaffii (strain GS115 / ATCC 20864) (Yeast) protein is Autophagy-related protein 36 (ATG35).